A 556-amino-acid polypeptide reads, in one-letter code: Potassium-transporting ATPase potassium-binding subunit (556 aa).

The next 10 helical transmembrane spans lie at 5 to 25, 65 to 85, 133 to 153, 176 to 196, 249 to 269, 283 to 303, 377 to 397, 415 to 435, 483 to 503, and 526 to 546; these read LAGI…HVPL, SVLA…LVQG, GLAV…IALV, IRIL…GGAI, PTTW…FSLP, YAIV…TLFF, AGLY…GLMV, LAAT…AVAM, ALGL…LALA, and FVGM…LPML.

Belongs to the KdpA family. The system is composed of three essential subunits: KdpA, KdpB and KdpC.

The protein localises to the cell membrane. Functionally, part of the high-affinity ATP-driven potassium transport (or Kdp) system, which catalyzes the hydrolysis of ATP coupled with the electrogenic transport of potassium into the cytoplasm. This subunit binds the extracellular potassium ions and delivers the ions to the membrane domain of KdpB through an intramembrane tunnel. This chain is Potassium-transporting ATPase potassium-binding subunit, found in Mycolicibacterium vanbaalenii (strain DSM 7251 / JCM 13017 / BCRC 16820 / KCTC 9966 / NRRL B-24157 / PYR-1) (Mycobacterium vanbaalenii).